We begin with the raw amino-acid sequence, 199 residues long: Lysine exporter LysE (199 aa).

Transmembrane regions (helical) follow at residues 6–26 (VVGF…NAFV), 42–62 (LCTV…GALI), 68–88 (ALNV…LLAA), 144–164 (WLFG…LGFG), and 178–198 (WRIL…SLTV).

Belongs to the LysE/ArgO transporter (TC 2.A.75) family.

It localises to the cell inner membrane. In terms of biological role, catalyzes the efflux of L-lysine. In Mycobacterium bovis (strain ATCC BAA-935 / AF2122/97), this protein is Lysine exporter LysE.